The chain runs to 406 residues: Enoyl-[acyl-carrier-protein] reductase [NADH] (406 aa).

Residues Gly-48–Phe-53, Phe-74–Glu-75, Asp-111–Ala-112, and Ile-140–Ala-141 each bind NAD(+). Tyr-226 provides a ligand contact to substrate. Tyr-236 serves as the catalytic Proton donor. Residues Lys-245 and Leu-275 to Thr-277 each bind NAD(+).

The protein belongs to the TER reductase family. In terms of assembly, monomer.

The catalysed reaction is a 2,3-saturated acyl-[ACP] + NAD(+) = a (2E)-enoyl-[ACP] + NADH + H(+). It functions in the pathway lipid metabolism; fatty acid biosynthesis. Functionally, involved in the final reduction of the elongation cycle of fatty acid synthesis (FAS II). Catalyzes the reduction of a carbon-carbon double bond in an enoyl moiety that is covalently linked to an acyl carrier protein (ACP). The polypeptide is Enoyl-[acyl-carrier-protein] reductase [NADH] (Coxiella burnetii (strain RSA 331 / Henzerling II)).